The following is a 148-amino-acid chain: Hemoglobin subunit beta-A (148 aa).

A Globin domain is found at 3–148 (DWTDAERAAI…VVSALGRQYH (146 aa)). Heme b contacts are provided by H64 and H93.

The protein belongs to the globin family. Heterotetramer of two alpha chains and two beta chains. Red blood cells.

Its function is as follows. Involved in oxygen transport from gills to the various peripheral tissues. This is Hemoglobin subunit beta-A (hbb1) from Seriola quinqueradiata (Five-ray yellowtail).